Here is a 618-residue protein sequence, read N- to C-terminus: DNA mismatch repair protein MutL (618 aa).

Positions 366-381 are enriched in low complexity; sequence AEPTAAREPATPRYSG. A disordered region spans residues 366 to 405; it reads AEPTAAREPATPRYSGGTSGGNGGRQSAGGWPHAQPGYQK. Residues 382 to 392 are compositionally biased toward gly residues; the sequence is GTSGGNGGRQS.

The protein belongs to the DNA mismatch repair MutL/HexB family.

Functionally, this protein is involved in the repair of mismatches in DNA. It is required for dam-dependent methyl-directed DNA mismatch repair. May act as a 'molecular matchmaker', a protein that promotes the formation of a stable complex between two or more DNA-binding proteins in an ATP-dependent manner without itself being part of a final effector complex. The chain is DNA mismatch repair protein MutL from Salmonella agona (strain SL483).